The sequence spans 486 residues: Bifunctional protein GlmU (486 aa).

Residues 1–236 form a pyrophosphorylase region; the sequence is MTDQNLAIVV…SWLVDGINDR (236 aa). UDP-N-acetyl-alpha-D-glucosamine is bound by residues 11 to 14, Lys25, Gln78, and 83 to 84; these read LAAG and GT. Position 109 (Asp109) interacts with Mg(2+). The UDP-N-acetyl-alpha-D-glucosamine site is built by Gly146, Glu161, Asn176, and Asn234. Asn234 contributes to the Mg(2+) binding site. The segment at 237–257 is linker; sequence AQLSEAAAKLNALTVRAWQLA. Positions 258–486 are N-acetyltransferase; sequence GVTVQDPATT…ASNAAEESGE (229 aa). 2 residues coordinate UDP-N-acetyl-alpha-D-glucosamine: Arg339 and Lys357. Residue His369 is the Proton acceptor of the active site. Residues Tyr372 and Asn383 each coordinate UDP-N-acetyl-alpha-D-glucosamine. Acetyl-CoA-binding positions include Ala386, 392–393, and Ala429; that span reads NY. Residues 459–486 form a disordered region; that stretch reads RRPGTDAARAAQRNGAAEASNAAEESGE. Over residues 465–486 the composition is skewed to low complexity; sequence AARAAQRNGAAEASNAAEESGE.

This sequence in the N-terminal section; belongs to the N-acetylglucosamine-1-phosphate uridyltransferase family. In the C-terminal section; belongs to the transferase hexapeptide repeat family. As to quaternary structure, homotrimer. The cofactor is Mg(2+).

It is found in the cytoplasm. It catalyses the reaction alpha-D-glucosamine 1-phosphate + acetyl-CoA = N-acetyl-alpha-D-glucosamine 1-phosphate + CoA + H(+). The catalysed reaction is N-acetyl-alpha-D-glucosamine 1-phosphate + UTP + H(+) = UDP-N-acetyl-alpha-D-glucosamine + diphosphate. It functions in the pathway nucleotide-sugar biosynthesis; UDP-N-acetyl-alpha-D-glucosamine biosynthesis; N-acetyl-alpha-D-glucosamine 1-phosphate from alpha-D-glucosamine 6-phosphate (route II): step 2/2. Its pathway is nucleotide-sugar biosynthesis; UDP-N-acetyl-alpha-D-glucosamine biosynthesis; UDP-N-acetyl-alpha-D-glucosamine from N-acetyl-alpha-D-glucosamine 1-phosphate: step 1/1. The protein operates within bacterial outer membrane biogenesis; LPS lipid A biosynthesis. Catalyzes the last two sequential reactions in the de novo biosynthetic pathway for UDP-N-acetylglucosamine (UDP-GlcNAc). The C-terminal domain catalyzes the transfer of acetyl group from acetyl coenzyme A to glucosamine-1-phosphate (GlcN-1-P) to produce N-acetylglucosamine-1-phosphate (GlcNAc-1-P), which is converted into UDP-GlcNAc by the transfer of uridine 5-monophosphate (from uridine 5-triphosphate), a reaction catalyzed by the N-terminal domain. This chain is Bifunctional protein GlmU, found in Leifsonia xyli subsp. xyli (strain CTCB07).